Here is a 102-residue protein sequence, read N- to C-terminus: Small ribosomal subunit protein uS10 (102 aa).

This sequence belongs to the universal ribosomal protein uS10 family. As to quaternary structure, part of the 30S ribosomal subunit.

Functionally, involved in the binding of tRNA to the ribosomes. This is Small ribosomal subunit protein uS10 from Treponema pallidum (strain Nichols).